A 388-amino-acid polypeptide reads, in one-letter code: Beta-1,4-galactosyltransferase 5 (388 aa).

Topologically, residues M1–S14 are cytoplasmic. The chain crosses the membrane as a helical; Signal-anchor for type II membrane protein span at residues L15–A35. Residues P36–Y388 lie on the Lumenal side of the membrane. 5 N-linked (GlcNAc...) asparagine glycosylation sites follow: N77, N81, N90, N111, and N128. A disulfide bond links C114 and C158. Residues P169–R173, F208–R210, V235–D236, Y264, and W296 each bind UDP-alpha-D-galactose. C229 and C248 are joined by a disulfide. Residue D236 participates in Mn(2+) binding. G298 to D301 contributes to the N-acetyl-D-glucosamine binding site. H329 contributes to the Mn(2+) binding site. A UDP-alpha-D-galactose-binding site is contributed by H329–H330. Residue R340 coordinates N-acetyl-D-glucosamine. 2 N-linked (GlcNAc...) asparagine glycosylation sites follow: N364 and N373.

This sequence belongs to the glycosyltransferase 7 family. The cofactor is Mn(2+). As to expression, ubiquitously expressed.

It localises to the golgi apparatus. Its subcellular location is the golgi stack membrane. The catalysed reaction is a beta-D-glucosyl-(1&lt;-&gt;1')-N-acylsphing-4-enine + UDP-alpha-D-galactose = a beta-D-Gal-(1-&gt;4)-beta-D-Glc-(1&lt;-&gt;1)-Cer(d18:1(4E)) + UDP + H(+). Its pathway is protein modification; protein glycosylation. It participates in sphingolipid metabolism. Functionally, catalyzes the synthesis of lactosylceramide (LacCer) via the transfer of galactose from UDP-galactose to glucosylceramide (GlcCer). LacCer is the starting point in the biosynthesis of all gangliosides (membrane-bound glycosphingolipids) which play pivotal roles in the CNS including neuronal maturation and axonal and myelin formation. Plays a role in the glycosylation of BMPR1A and regulation of its protein stability. Essential for extraembryonic development during early embryogenesis. The polypeptide is Beta-1,4-galactosyltransferase 5 (Homo sapiens (Human)).